The chain runs to 147 residues: uncharacterized protein (147 aa).

The 94-residue stretch at Y52 to C145 folds into the Rhodanese domain.

This is an uncharacterized protein from Buchnera aphidicola subsp. Baizongia pistaciae (strain Bp).